Consider the following 327-residue polypeptide: Biotin synthase (327 aa).

Residues 42–268 (NKVQKASLLS…VMPASTVRLS (227 aa)) form the Radical SAM core domain. The [4Fe-4S] cluster site is built by Cys-57, Cys-61, and Cys-64. Residues Cys-102, Cys-134, Cys-194, and Arg-266 each contribute to the [2Fe-2S] cluster site.

This sequence belongs to the radical SAM superfamily. Biotin synthase family. Homodimer. The cofactor is [4Fe-4S] cluster. [2Fe-2S] cluster is required as a cofactor.

The enzyme catalyses (4R,5S)-dethiobiotin + (sulfur carrier)-SH + 2 reduced [2Fe-2S]-[ferredoxin] + 2 S-adenosyl-L-methionine = (sulfur carrier)-H + biotin + 2 5'-deoxyadenosine + 2 L-methionine + 2 oxidized [2Fe-2S]-[ferredoxin]. The protein operates within cofactor biosynthesis; biotin biosynthesis; biotin from 7,8-diaminononanoate: step 2/2. Its function is as follows. Catalyzes the conversion of dethiobiotin (DTB) to biotin by the insertion of a sulfur atom into dethiobiotin via a radical-based mechanism. This is Biotin synthase from Rhizobium rhizogenes (strain K84 / ATCC BAA-868) (Agrobacterium radiobacter).